We begin with the raw amino-acid sequence, 335 residues long: DNA polymerase beta (335 aa).

Lysine 41 is covalently cross-linked (Glycyl lysine isopeptide (Lys-Gly) (interchain with G-Cter in ubiquitin)). A K(+)-binding site is contributed by lysine 60. Lysine 60 provides a ligand contact to Na(+). Residue lysine 61 forms a Glycyl lysine isopeptide (Lys-Gly) (interchain with G-Cter in ubiquitin) linkage. Residues leucine 62 and valine 65 each coordinate K(+). Positions 62 and 65 each coordinate Na(+). Lysine 72 (nucleophile; Schiff-base intermediate with DNA; for 5'-dRP lyase activity) is an active-site residue. Lysine 72 bears the N6-acetyllysine mark. Lysine 81 is covalently cross-linked (Glycyl lysine isopeptide (Lys-Gly) (interchain with G-Cter in ubiquitin)). Arginine 83 is modified (omega-N-methylarginine; by PRMT6). Residues threonine 101, valine 103, and isoleucine 106 each coordinate K(+). Residues threonine 101, valine 103, and isoleucine 106 each coordinate Na(+). Arginine 149 is a binding site for a 2'-deoxyribonucleoside 5'-triphosphate. The residue at position 152 (arginine 152) is an Omega-N-methylarginine; by PRMT6. Residues serine 180, arginine 183, glycine 189, and aspartate 190 each contribute to the a 2'-deoxyribonucleoside 5'-triphosphate site. A DNA-binding region spans residues arginine 183–aspartate 192. The Mg(2+) site is built by aspartate 190, aspartate 192, and aspartate 256.

It belongs to the DNA polymerase type-X family. As to quaternary structure, monomer. Binds single-stranded DNA (ssDNA). Interacts with APEX1, LIG1, LIG3, FEN1, PCNA and XRCC1. Interacts with HUWE1/ARF-BP1, STUB1/CHIP and USP47. Interacts with FAM168A. Mg(2+) serves as cofactor. In terms of processing, methylation by PRMT6 stimulates the polymerase activity by enhancing DNA binding and processivity. Ubiquitinated at Lys-41, Lys-61 and Lys-81: monoubiquitinated by HUWE1/ARF-BP1. Monoubiquitinated protein is then the target of STUB1/CHIP, which catalyzes polyubiquitination from monoubiquitin, leading to degradation by the proteasome. USP47 mediates the deubiquitination of monoubiquitinated protein, preventing polyubiquitination by STUB1/CHIP and its subsequent degradation.

The protein localises to the nucleus. It localises to the cytoplasm. It carries out the reaction DNA(n) + a 2'-deoxyribonucleoside 5'-triphosphate = DNA(n+1) + diphosphate. The enzyme catalyses a 5'-end 2'-deoxyribose-2'-deoxyribonucleotide-DNA = (2E,4S)-4-hydroxypenten-2-al-5-phosphate + a 5'-end 5'-phospho-2'-deoxyribonucleoside-DNA + H(+). The catalysed reaction is 2'-deoxyribonucleotide-(2'-deoxyribose 5'-phosphate)-2'-deoxyribonucleotide-DNA = a 3'-end 2'-deoxyribonucleotide-(2,3-dehydro-2,3-deoxyribose 5'-phosphate)-DNA + a 5'-end 5'-phospho-2'-deoxyribonucleoside-DNA + H(+). Its function is as follows. Repair polymerase that plays a key role in base-excision repair. During this process, the damaged base is excised by specific DNA glycosylases, the DNA backbone is nicked at the abasic site by an apurinic/apyrimidic (AP) endonuclease, and POLB removes 5'-deoxyribose-phosphate from the preincised AP site acting as a 5'-deoxyribose-phosphate lyase (5'-dRP lyase); through its DNA polymerase activity, it adds one nucleotide to the 3' end of the arising single-nucleotide gap. Conducts 'gap-filling' DNA synthesis in a stepwise distributive fashion rather than in a processive fashion as for other DNA polymerases. It is also able to cleave sugar-phosphate bonds 3' to an intact AP site, acting as an AP lyase. In Rattus norvegicus (Rat), this protein is DNA polymerase beta (Polb).